Consider the following 778-residue polypeptide: Dolichyl-phosphate-mannose--protein mannosyltransferase 4 (778 aa).

The segment covering 1 to 28 has biased composition (basic and acidic residues); it reads MASKSEKAVKKAQKLSKEPSVELTDTKS. The disordered stretch occupies residues 1-44; that stretch reads MASKSEKAVKKAQKLSKEPSVELTDTKSSDNVTPKQKSPNSTEE. The segment covering 29–41 has biased composition (polar residues); it reads SDNVTPKQKSPNS. The N-linked (GlcNAc...) asparagine glycan is linked to Asn40. 7 consecutive transmembrane segments (helical) span residues 60–80, 103–123, 145–165, 196–216, 223–243, 248–268, and 288–308; these read LAFV…LNLP, FFDL…KLAG, VTIR…VFLI, ILLD…YVRF, PFSR…SCTI, VGFF…WYLW, and FCLI…HFNI. N-linked (GlcNAc...) asparagine glycosylation occurs at Asn335. 3 MIR domains span residues 336-396, 408-467, and 474-529; these read STIL…ILPA, NVPV…VVMS, and RPLY…FDDI. Transmembrane regions (helical) follow at residues 608–628, 644–664, 669–689, and 726–746; these read WWII…EILL, FYRS…PFFI, LFLH…GAFI, and VIEL…FTFF.

This sequence belongs to the glycosyltransferase 39 family.

It is found in the endoplasmic reticulum membrane. It carries out the reaction a di-trans,poly-cis-dolichyl beta-D-mannosyl phosphate + L-seryl-[protein] = 3-O-(alpha-D-mannosyl)-L-seryl-[protein] + a di-trans,poly-cis-dolichyl phosphate + H(+). The enzyme catalyses a di-trans,poly-cis-dolichyl beta-D-mannosyl phosphate + L-threonyl-[protein] = 3-O-(alpha-D-mannosyl)-L-threonyl-[protein] + a di-trans,poly-cis-dolichyl phosphate + H(+). The protein operates within protein modification; protein glycosylation. In terms of biological role, transfers mannose from Dol-P-mannose to Ser or Thr residues on proteins. Required for normal cell wall and septum formation. This is Dolichyl-phosphate-mannose--protein mannosyltransferase 4 (ogm4) from Schizosaccharomyces pombe (strain 972 / ATCC 24843) (Fission yeast).